The sequence spans 1028 residues: Contactin-6 (1028 aa).

A signal peptide spans 1–19 (MRLLWKLVILLPLINSCAG). Ig-like C2-type domains lie at 32–117 (PQDV…AKLQ), 122–208 (EDFE…RSVQ), 227–308 (PKIE…RNLA), 318–402 (PEWE…AELR), 408–502 (PDFS…RTII), and 500–587 (TIIT…ERLS). 6 disulfide bridges follow: cysteine 50/cysteine 100, cysteine 144/cysteine 196, cysteine 249/cysteine 297, cysteine 339/cysteine 386, cysteine 431/cysteine 479, and cysteine 521/cysteine 577. Asparagine 65 and asparagine 193 each carry an N-linked (GlcNAc...) asparagine glycan. N-linked (GlcNAc...) asparagine glycans are attached at residues asparagine 368, asparagine 377, and asparagine 468. 4 consecutive Fibronectin type-III domains span residues 600–698 (PPED…TKAS), 703–800 (APGN…SGED), 805–901 (APRG…TKKS), and 902–996 (PPSQ…KMSS). N-linked (GlcNAc...) asparagine glycosylation is found at asparagine 659, asparagine 765, asparagine 860, and asparagine 865. Residue tyrosine 882 is modified to Phosphotyrosine. 4 N-linked (GlcNAc...) asparagine glycosylation sites follow: asparagine 895, asparagine 931, asparagine 956, and asparagine 957. Serine 999 is lipidated: GPI-anchor amidated serine. A propeptide spans 1000–1028 (TGVQISKPSTQSLSMVGVFYCFAIHPLSR) (removed in mature form).

It belongs to the immunoglobulin superfamily. Contactin family. In terms of assembly, interacts with PTPRG. In terms of tissue distribution, expressed in brain. In brain, it is preferentially expressed in the accessory olfactory bulb, layers II/III and V of the cerebral cortex, piriform cortex, anterior thalamic nuclei, locus coeruleus of the pons and mesencephalic trigeminal nucleus and in Purkinje cells of the cerebellum.

The protein localises to the cell membrane. Its function is as follows. Contactins mediate cell surface interactions during nervous system development. Participates in oligodendrocytes generation by acting as a ligand of NOTCH1. Its association with NOTCH1 promotes NOTCH1 activation through the released notch intracellular domain (NICD) and subsequent translocation to the nucleus. Involved in motor coordination. This chain is Contactin-6 (Cntn6), found in Mus musculus (Mouse).